A 385-amino-acid polypeptide reads, in one-letter code: S-adenosylmethionine synthase (385 aa).

His15 is a binding site for ATP. Asp17 lines the Mg(2+) pocket. Glu43 is a binding site for K(+). L-methionine contacts are provided by Glu56 and Gln99. Residues 99–109 form a flexible loop region; it reads QSPEIAQGVDE. ATP is bound by residues 164-166, 230-231, Asp239, 245-246, Ala262, and Lys266; these read DAK, RF, and RK. Position 239 (Asp239) interacts with L-methionine. Lys270 is an L-methionine binding site.

The protein belongs to the AdoMet synthase family. In terms of assembly, homotetramer; dimer of dimers. It depends on Mg(2+) as a cofactor. Requires K(+) as cofactor.

The protein resides in the cytoplasm. It carries out the reaction L-methionine + ATP + H2O = S-adenosyl-L-methionine + phosphate + diphosphate. The protein operates within amino-acid biosynthesis; S-adenosyl-L-methionine biosynthesis; S-adenosyl-L-methionine from L-methionine: step 1/1. In terms of biological role, catalyzes the formation of S-adenosylmethionine (AdoMet) from methionine and ATP. The overall synthetic reaction is composed of two sequential steps, AdoMet formation and the subsequent tripolyphosphate hydrolysis which occurs prior to release of AdoMet from the enzyme. The sequence is that of S-adenosylmethionine synthase from Hydrogenovibrio crunogenus (strain DSM 25203 / XCL-2) (Thiomicrospira crunogena).